The chain runs to 254 residues: 5-oxoprolinase subunit A (254 aa).

The protein belongs to the LamB/PxpA family. As to quaternary structure, forms a complex composed of PxpA, PxpB and PxpC.

The catalysed reaction is 5-oxo-L-proline + ATP + 2 H2O = L-glutamate + ADP + phosphate + H(+). Catalyzes the cleavage of 5-oxoproline to form L-glutamate coupled to the hydrolysis of ATP to ADP and inorganic phosphate. This is 5-oxoprolinase subunit A from Burkholderia orbicola (strain MC0-3).